The sequence spans 174 residues: NADH-quinone oxidoreductase subunit B 1 (174 aa).

Positions 53, 54, 118, and 148 each coordinate [4Fe-4S] cluster.

It belongs to the complex I 20 kDa subunit family. NDH-1 is composed of 14 different subunits. Subunits NuoB, C, D, E, F, and G constitute the peripheral sector of the complex. The cofactor is [4Fe-4S] cluster.

It localises to the cell inner membrane. The catalysed reaction is a quinone + NADH + 5 H(+)(in) = a quinol + NAD(+) + 4 H(+)(out). In terms of biological role, NDH-1 shuttles electrons from NADH, via FMN and iron-sulfur (Fe-S) centers, to quinones in the respiratory chain. The immediate electron acceptor for the enzyme in this species is believed to be ubiquinone. Couples the redox reaction to proton translocation (for every two electrons transferred, four hydrogen ions are translocated across the cytoplasmic membrane), and thus conserves the redox energy in a proton gradient. In Cereibacter sphaeroides (strain KD131 / KCTC 12085) (Rhodobacter sphaeroides), this protein is NADH-quinone oxidoreductase subunit B 1.